Consider the following 356-residue polypeptide: MMILRLALAIVISTYATAQPASTSSLVTYIFGDSLTEVGNNNFLQYSLARADFPYYGVDFSGGKATGRFTNGRTIGDIISTKLGILSPPPYLSLSQNDDAFLSGINYASGGAGILNETGIYFIQRLTFNDQINCFKKTKEVIRAKIGDGAANKHVNDAMYFIGLGSNDYVNNFLQPFMADGQQYTHDEFVELLTSTLHNQLTTIYKLGARKVIFHGLGPLGCIPSQRVKSKTRMCLNRVNEWVLEFNSRTKKLLIDLNKRLPGAKFSFADTYPAVLDLINNPTHYGFKIANTSCCNVDTSVGGLCLPNSKMCKNRQDFVFWDAFHPSDSANQILADHLFSSLLSSSSPSPAPKPRQ.

A signal peptide spans 1–18 (MMILRLALAIVISTYATA). Ser34 serves as the catalytic Nucleophile. 2 N-linked (GlcNAc...) asparagine glycosylation sites follow: Asn116 and Asn291. Catalysis depends on residues Asp322 and His325.

Belongs to the 'GDSL' lipolytic enzyme family.

It is found in the secreted. The sequence is that of GDSL esterase/lipase At5g37690 from Arabidopsis thaliana (Mouse-ear cress).